A 454-amino-acid chain; its full sequence is Carbamoyl phosphate synthase arginine-specific small chain (454 aa).

Residues 1-29 (MMFSRFFKAVPARAPAFSSPLPVYQARTM) constitute a mitochondrion transit peptide. In terms of domain architecture, Glutamine amidotransferase type-1 spans 219-406 (HVAVLDCGVK…IDSVKKYKNS (188 aa)). Residue cysteine 295 is the Nucleophile of the active site. Active-site residues include histidine 379 and glutamate 381.

This sequence belongs to the CarA family. In terms of assembly, heterodimer composed of 2 chains; the small (or glutamine) chain promotes the hydrolysis of glutamine to ammonia, which is used by the large (or ammonia) chain to synthesize carbamoyl phosphate.

It localises to the mitochondrion matrix. The enzyme catalyses hydrogencarbonate + L-glutamine + 2 ATP + H2O = carbamoyl phosphate + L-glutamate + 2 ADP + phosphate + 2 H(+). It carries out the reaction L-glutamine + H2O = L-glutamate + NH4(+). The protein operates within amino-acid biosynthesis; L-arginine biosynthesis; carbamoyl phosphate from bicarbonate: step 1/1. Functionally, small subunit of the arginine-specific carbamoyl phosphate synthase (CPSase). CPSase catalyzes the formation of carbamoyl phosphate from the ammonia moiety of glutamine, carbonate, and phosphate donated by ATP, the first step of the arginine biosynthetic pathway. The small subunit (glutamine amidotransferase) binds and cleaves glutamine to supply the large subunit with the substrate ammonia. The chain is Carbamoyl phosphate synthase arginine-specific small chain (cpa-1) from Emericella nidulans (strain FGSC A4 / ATCC 38163 / CBS 112.46 / NRRL 194 / M139) (Aspergillus nidulans).